A 128-amino-acid polypeptide reads, in one-letter code: Type III secretion protein HrcQb (128 aa).

The segment covering 1–21 (MSTEDLYQEDVEMLDDYEDPS) has biased composition (acidic residues). The segment at 1-57 (MSTEDLYQEDVEMLDDYEDPSTEQHWSEEDGEPSGYATAEPDDHAAQEEQDEPPALD) is disordered. The hrcQb-C stretch occupies residues 50 to 128 (QDEPPALDSL…LQITRLVTRS (79 aa)). The interval 78–81 (RRLD) is dimer-dimer interface.

It belongs to the FliN/MopA/SpaO family. As to quaternary structure, homotetramer. The four monomers assemble into two tightly bound homodimers. Interacts with HrcQa.

Its subcellular location is the cytoplasm. Its function is as follows. Component of the type III secretion system, which is required for effector protein delivery, parasitism, and pathogenicity. Probably participates in the formation of a C-ring-like assembly along with HrcQa. In Pseudomonas savastanoi pv. phaseolicola (Pseudomonas syringae pv. phaseolicola), this protein is Type III secretion protein HrcQb (hrcQb).